The primary structure comprises 110 residues: Waprin-Thr1 (110 aa).

The N-terminal stretch at 1–20 (MYKKGTILVLAYLLIATAVC) is a signal peptide. The 47-residue stretch at 22 to 68 (LSYKEGHCPLRNSVSKCIPRCVSDYQCSFNEKCCPNKCGSESCVQAS) folds into the WAP domain. Cystine bridges form between C29–C55, C38–C59, C42–C54, and C48–C64.

The protein belongs to the venom waprin family. Cys-rich waprin subfamily. Expressed by the venom gland.

It is found in the secreted. Its function is as follows. Antimicrobial peptides with activity against Gram-positive and Gram-negative bacteria as well as fungi. Recognizes carbohydrates in the microbial cell walls, and induces structural damage to them. Also inhibits microbial serine proteases subtilisin A and proteinase K, as well as human and porcine elastases. Carbohydrates that are recognized are LPS, mannan, peptidoglycan, and N-acetl-D-glucosamine. This chain is Waprin-Thr1, found in Apis mellifera (Honeybee).